The following is a 694-amino-acid chain: Glycine--tRNA ligase beta subunit (694 aa).

It belongs to the class-II aminoacyl-tRNA synthetase family. As to quaternary structure, tetramer of two alpha and two beta subunits.

It localises to the cytoplasm. The enzyme catalyses tRNA(Gly) + glycine + ATP = glycyl-tRNA(Gly) + AMP + diphosphate. This is Glycine--tRNA ligase beta subunit from Moorella thermoacetica (strain ATCC 39073 / JCM 9320).